A 344-amino-acid chain; its full sequence is Dihydroorotase (344 aa).

Residues His14 and His16 each contribute to the Zn(2+) site. Substrate-binding positions include 16-18 and Asn42; that span reads HLR. 3 residues coordinate Zn(2+): Lys100, His137, and His175. Lys100 carries the post-translational modification N6-carboxylysine. His137 is a substrate binding site. Residue Leu220 participates in substrate binding. Asp248 provides a ligand contact to Zn(2+). The active site involves Asp248. Residues His252 and Ala264 each contribute to the substrate site.

The protein belongs to the metallo-dependent hydrolases superfamily. DHOase family. Class II DHOase subfamily. In terms of assembly, homodimer. It depends on Zn(2+) as a cofactor.

The enzyme catalyses (S)-dihydroorotate + H2O = N-carbamoyl-L-aspartate + H(+). It functions in the pathway pyrimidine metabolism; UMP biosynthesis via de novo pathway; (S)-dihydroorotate from bicarbonate: step 3/3. Functionally, catalyzes the reversible cyclization of carbamoyl aspartate to dihydroorotate. This Cupriavidus necator (strain ATCC 17699 / DSM 428 / KCTC 22496 / NCIMB 10442 / H16 / Stanier 337) (Ralstonia eutropha) protein is Dihydroorotase.